Reading from the N-terminus, the 338-residue chain is DNA-directed RNA polymerase I subunit RPA43 (338 aa).

A disordered region spans residues 209–338 (EVSEEVTENG…PKRKGKSNFL (130 aa)). A phosphoserine mark is found at Ser-242, Ser-304, and Ser-316. Thr-322 carries the phosphothreonine modification. Ser-328 carries the post-translational modification Phosphoserine. Over residues 328-338 (SPKRKGKSNFL) the composition is skewed to basic residues.

It belongs to the eukaryotic RPA43 RNA polymerase subunit family. As to quaternary structure, component of the RNA polymerase I (Pol I) complex consisting of 13 subunits: a ten-subunit catalytic core composed of POLR1A/RPA1, POLR1B/RPA2, POLR1C/RPAC1, POLR1D/RPAC2, POLR1H/RPA12, POLR2E/RPABC1, POLR2F/RPABC2, POLR2H/RPABC3, POLR2K/RPABC4 and POLR2L/RPABC5; a mobile stalk subunit POLR1F/RPA43 protruding from the core and additional subunits homologous to general transcription factors POLR1E/RPA49 and POLR1G/RPA34. Interacts with RRN3/TIF-IA. As to expression, widely expressed. Expressed in all fetal and adult tissues tested, with highest expression in fetal lung, liver, and kidney, and low expression in all adult tissues.

The protein resides in the nucleus. Its subcellular location is the nucleolus. Its function is as follows. Component of RNA polymerase I (Pol I), a DNA-dependent RNA polymerase which synthesizes ribosomal RNA precursors using the four ribonucleoside triphosphates as substrates. Through its association with RRN3/TIF-IA may be involved in recruitment of Pol I to rDNA promoters. This chain is DNA-directed RNA polymerase I subunit RPA43, found in Homo sapiens (Human).